A 325-amino-acid chain; its full sequence is Phosphate acyltransferase (325 aa).

This sequence belongs to the PlsX family. Homodimer. Probably interacts with PlsY.

The protein localises to the cytoplasm. It carries out the reaction a fatty acyl-[ACP] + phosphate = an acyl phosphate + holo-[ACP]. It participates in lipid metabolism; phospholipid metabolism. Its function is as follows. Catalyzes the reversible formation of acyl-phosphate (acyl-PO(4)) from acyl-[acyl-carrier-protein] (acyl-ACP). This enzyme utilizes acyl-ACP as fatty acyl donor, but not acyl-CoA. The chain is Phosphate acyltransferase from Staphylococcus epidermidis (strain ATCC 12228 / FDA PCI 1200).